The primary structure comprises 408 residues: Peptidase T (408 aa).

His-78 lines the Zn(2+) pocket. The active site involves Asp-80. Asp-141 provides a ligand contact to Zn(2+). The Proton acceptor role is filled by Glu-175. Residues Glu-176, Asp-198, and His-380 each contribute to the Zn(2+) site.

The protein belongs to the peptidase M20B family. Zn(2+) serves as cofactor.

It is found in the cytoplasm. The catalysed reaction is Release of the N-terminal residue from a tripeptide.. Functionally, cleaves the N-terminal amino acid of tripeptides. The polypeptide is Peptidase T (Clostridium acetobutylicum (strain ATCC 824 / DSM 792 / JCM 1419 / IAM 19013 / LMG 5710 / NBRC 13948 / NRRL B-527 / VKM B-1787 / 2291 / W)).